We begin with the raw amino-acid sequence, 360 residues long: DNA replication and repair protein RecF (360 aa).

Residue Gly-33–Thr-40 coordinates ATP.

The protein belongs to the RecF family.

The protein resides in the cytoplasm. Its function is as follows. The RecF protein is involved in DNA metabolism; it is required for DNA replication and normal SOS inducibility. RecF binds preferentially to single-stranded, linear DNA. It also seems to bind ATP. The protein is DNA replication and repair protein RecF of Rickettsia bellii (strain OSU 85-389).